The chain runs to 483 residues: Leukocyte immunoglobulin-like receptor subfamily A member 2 (483 aa).

Positions 1 to 23 (MTPILTVLICLGLSLGPRTHVQA) are cleaved as a signal peptide. Topologically, residues 24-449 (GHLPKPTLWA…QHPQDYTVEN (426 aa)) are extracellular. Ig-like C2-type domains are found at residues 27 to 113 (PKPT…DPLE), 117 to 222 (TGAY…GVSK), 224 to 313 (PSLS…DPLD), and 324 to 413 (PSLS…SDPL). C49 and C97 are disulfide-bonded. 3 N-linked (GlcNAc...) asparagine glycosylation sites follow: N64, N103, and N138. 2 cysteine pairs are disulfide-bonded: C143–C195 and C244–C295. 3 N-linked (GlcNAc...) asparagine glycosylation sites follow: N279, N300, and N339. A disulfide bridge connects residues C344 and C395. At Y404 the chain carries 3'-nitrotyrosine. N-linked (GlcNAc...) asparagine glycosylation is present at N429. Residues 450-470 (LIRMGVAGLVLVVLGILLFEA) form a helical membrane-spanning segment. The Cytoplasmic portion of the chain corresponds to 471-483 (QHSQRSLQDAAGR).

As to quaternary structure, homodimer. As to expression, detected on the surface of all peripheral blood monocytes, neutrophils, basophils and eosinophils (at protein level). Expression levels are very low or not detectable on monocytes, T-cells, B-cells, dendritic cells and natural killer (NK) cells.

It localises to the cell membrane. The protein resides in the secreted. Functionally, part of the innate immune responses against microbial infection. Specifically recognizes a set of N-terminally truncated immunoglobulins that are produced via cleavage by proteases from a range of pathogenic bacteria and fungi, including L.pneumophila, M.hyorhinis, S.pneumoniae, S.aureus and C.albicans. Recognizes epitopes that are in part in the variable region of the immunoglobulin light chains, but requires also the constant region for signaling. Binds to a subset of cleaved IgM, IgG3 and IgG4 molecules, but does not bind cleaved IgA1. Binding of N-terminally truncated immunoglobulins mediates activation of neutrophils. In monocytes, activation leads to the release of CSF2, CF3, IL6, CXCL8 and CCL3 and down-regulates responses to bacterial lipopolysaccharide (LPS), possibly via down-regulation of TLR4 expression and reduced signaling via TLR4. In eosinophils, activation by ligand binding leads to the release of RNASE2, IL4 and leukotriene C4. Does not bind class I MHC antigens. The polypeptide is Leukocyte immunoglobulin-like receptor subfamily A member 2 (LILRA2) (Homo sapiens (Human)).